A 494-amino-acid chain; its full sequence is Alpha-amylase-related protein (494 aa).

The N-terminal stretch at 1-20 (MIKFALALTLCLAGASLSLA) is a signal peptide. Residue Gln21 is modified to Pyrrolidone carboxylic acid. Residues Cys48 and Cys104 are joined by a disulfide bond. 3 residues coordinate Ca(2+): Asn118, Gln169, and Asp178. Cys157 and Cys171 form a disulfide bridge. Residue Arg206 participates in chloride binding. The active-site Nucleophile is Asp208. Ca(2+) is bound at residue His212. The active-site Proton donor is Glu245. Asn308 and Arg343 together coordinate chloride. Cystine bridges form between Cys376–Cys382, Cys418–Cys441, and Cys448–Cys460.

This sequence belongs to the glycosyl hydrolase 13 family. In terms of assembly, monomer. It depends on Ca(2+) as a cofactor. Chloride serves as cofactor.

It localises to the secreted. It catalyses the reaction Endohydrolysis of (1-&gt;4)-alpha-D-glucosidic linkages in polysaccharides containing three or more (1-&gt;4)-alpha-linked D-glucose units.. This Drosophila bakoue (Fruit fly) protein is Alpha-amylase-related protein (Amyrel).